The chain runs to 715 residues: Dynein axonemal intermediate chain 7 (715 aa).

Positions 291-322 are disordered; sequence AVSKDLQEENKQENESNSVHEEETKAEGQGDV. Residues 295–318 are compositionally biased toward basic and acidic residues; sequence DLQEENKQENESNSVHEEETKAEG.

The protein belongs to the DNAI7 family. As to quaternary structure, part of the multisubunit axonemal dynein complex formed at least of two heavy chains and a number of intermediate and light chains. Associates with tubulin. Interacts with microtubule. Post-translationally, ubiquitinated. Ubiquitination leads to its degradation through the 26S proteasome. Ubiquitin-proteasome-mediated DNAI7 degradation occurs in mitosis.

Its subcellular location is the cell projection. It localises to the cilium. It is found in the cytoplasm. Via its association with the multisubunit axonemal dynein complex, is potentially involved in the regulation of cilia function. May act as a cell cycle regulator. The chain is Dynein axonemal intermediate chain 7 from Bos taurus (Bovine).